A 102-amino-acid chain; its full sequence is Large ribosomal subunit protein uL24 (102 aa).

The protein belongs to the universal ribosomal protein uL24 family. As to quaternary structure, part of the 50S ribosomal subunit.

Its function is as follows. One of two assembly initiator proteins, it binds directly to the 5'-end of the 23S rRNA, where it nucleates assembly of the 50S subunit. One of the proteins that surrounds the polypeptide exit tunnel on the outside of the subunit. In Lysinibacillus sphaericus (strain C3-41), this protein is Large ribosomal subunit protein uL24.